The chain runs to 364 residues: MPYQYPALTPEQKKELSDIAHRIVAPGKGILAADESTGSIAKRLQSIGTENTEENRRFYRQLLLTADDRVNPCIGGVILFHETLYQKADDGRPFPQVIKSKGGVVGIKVDKGVVPLAGTNGETTTQGLDGLSERCAQYKKDGADFAKWRCVLKIGEHTPSALAIMENANVLARYASICQQNGIVPIVEPEILPDGDHDLKRCQYVTEKVLAAVYKALSDHHIYLEGTLLKPNMVTPGHACTQKFSHEEIAMATVTALRRTVPPAVTGITFLSGGQSEEEASINLNAINKCPLLKPWALTFSYGRALQASALKAWGGKKENLKAAQEEYVKRALANSLACQGKYTPSGQAGAAASESLFVSNHAY.

Y5 carries the phosphotyrosine modification. T9 bears the Phosphothreonine mark. Residues S36 and S39 each carry the phosphoserine modification. K42 bears the N6-acetyllysine; alternate mark. K42 is covalently cross-linked (Glycyl lysine isopeptide (Lys-Gly) (interchain with G-Cter in SUMO1); alternate). A Glycyl lysine isopeptide (Lys-Gly) (interchain with G-Cter in SUMO2); alternate cross-link involves residue K42. Residue R43 participates in beta-D-fructose 1,6-bisphosphate binding. S46 carries the post-translational modification Phosphoserine. K99 bears the N6-(2-hydroxyisobutyryl)lysine mark. K108 is subject to N6-acetyllysine. K111 carries the post-translational modification N6-acetyllysine; alternate. The residue at position 111 (K111) is an N6-malonyllysine; alternate. S132 is modified (phosphoserine). Residue K147 is modified to N6-(2-hydroxyisobutyryl)lysine. E188 acts as the Proton acceptor in catalysis. K230 acts as the Schiff-base intermediate with dihydroxyacetone-P in catalysis. At S272 the chain carries Phosphoserine. Beta-D-fructose 1,6-bisphosphate contacts are provided by residues 272–274, S301, and R304; that span reads SGG. Position 312 is an N6-malonyllysine (K312). N6-acetyllysine is present on K330.

It belongs to the class I fructose-bisphosphate aldolase family. As to quaternary structure, homotetramer. Interacts with SNX9 and WAS. Interacts with FBP2; the interaction blocks FBP2 inhibition by physiological concentrations of AMP and reduces inhibition by Ca(2+).

Its subcellular location is the cytoplasm. The protein localises to the myofibril. It is found in the sarcomere. The protein resides in the i band. It localises to the m line. The enzyme catalyses beta-D-fructose 1,6-bisphosphate = D-glyceraldehyde 3-phosphate + dihydroxyacetone phosphate. The protein operates within carbohydrate degradation; glycolysis; D-glyceraldehyde 3-phosphate and glycerone phosphate from D-glucose: step 4/4. Catalyzes the reversible conversion of beta-D-fructose 1,6-bisphosphate (FBP) into two triose phosphate and plays a key role in glycolysis and gluconeogenesis. In addition, may also function as scaffolding protein. The protein is Fructose-bisphosphate aldolase A of Homo sapiens (Human).